The following is an 892-amino-acid chain: Dystroglycan 1 (892 aa).

An N-terminal signal peptide occupies residues 1–27 (MRMSAGLSLLLPLWGRTFLLLLSVAMA). Residues 28–750 (QSHWPSEAGR…SSEDDVYLHT (723 aa)) lie on the Extracellular side of the membrane. The segment at 30-405 (HWPSEAGRDW…GQIRPTMTIP (376 aa)) is required for laminin recognition. An O-glycosylated at one site region spans residues 46 to 68 (SMHSVLSDLHEAVPTVVGIPDGI). N-linked (GlcNAc...) asparagine glycosylation occurs at N138. C179 and C261 form a disulfide bridge. Residues 313–482 (ATPTPVTAIG…PPTRIRTTTS (170 aa)) are mucin-like domain. 3 O-linked (Man6P...) threonine glycosylation sites follow: T314, T316, and T376. Residues 378-497 (TLGPIQPTRV…GEPNQRPELK (120 aa)) form a disordered region. Positions 410-444 (PTAVATPPTTTTKKPRVSTPKPATPSTDSSTTTTR) are enriched in low complexity. The interval 460-482 (TTKAPITRLETASPPTRIRTTTS) is O-glycosylated at seven sites with GalNAc. Positions 600–709 (RAPARFKAKF…SSIAVTGSGS (110 aa)) constitute a Peptidase S72 domain. 3 N-linked (GlcNAc...) asparagine glycosylation sites follow: N638, N646, and N658. C666 and C710 are oxidised to a cystine. Residues 721–742 (PRRVPSEVPSTDVPDRDPEKSS) form a disordered region. The span at 733–742 (VPDRDPEKSS) shows a compositional bias: basic and acidic residues. A helical transmembrane segment spans residues 751-771 (VIPAVVVAAILLIAGIIAMIC). Over 772–892 (YRKKRKGKLT…YRSPPPYVPP (121 aa)) the chain is Cytoplasmic. A Nuclear localization signal motif is present at residues 773-779 (RKKRKGK). T787 is modified (phosphothreonine). The required for interaction with CAV3 stretch occupies residues 816–892 (LQEEKAPLPP…YRSPPPYVPP (77 aa)). The tract at residues 820 to 892 (KAPLPPPEYP…YRSPPPYVPP (73 aa)) is disordered. The segment covering 829 to 843 (PNQSVPETTPLNQDT) has biased composition (polar residues). The span at 856–867 (NAPPYQPPPPFT) shows a compositional bias: pro residues. A required for binding DMD and UTRN region spans residues 877-892 (PKNMTPYRSPPPYVPP). The short motif at 886 to 889 (PPPY) is the PPXY motif element. The residue at position 889 (Y889) is a Phosphotyrosine; by SRC.

Monomer. Heterodimer of alpha- and beta-dystroglycan subunits which are the central components of the dystrophin-glycoprotein complex. This complex then can form a dystrophin-associated glycoprotein complex (DGC) which is composed of three subcomplexes: a cytoplasmic complex comprised of DMD (or UTRN), DTNA and a number of syntrophins, such as SNTB1, SNTB2, SNTG1 and SNTG2, the transmembrane dystroglycan complex, and the sarcoglycan-sarcospan complex. Interacts (via the N-terminal of alphaDAG1) with LARGE1; the interaction enhances laminin binding. Interacts with SGCD. Interacts with AGR2 and AGR3. Interacts (betaDAG1) with DMD; the interaction is inhibited by phosphorylation on the PPXY motif. Interacts (betaDAG1, via its PPXY motif) with UTRN (via its WWW and ZZ domains); the interaction is inhibited by phosphorylation on the PPXY motif. Interacts (betaDAG1, via its phosphorylated PPXY motif) with the SH2 domain-containing proteins, FYN, CSK, NCK and SHC. Interacts (betaDAG1) with CAV3 (via a central WW-like domain); the interaction disrupts the binding of DMD. BetaDAG1 directly interacts with ANK3, but not with ANK2; this interaction does not interfere with DMD-binding and is required for retention at costameres. Identified in a dystroglycan complex that contains at least PRX, DRP2, UTRN, DMD and DAG1. Interacts with POMGNT1. BetaDAG1 interacts with CD93. O-glycosylated. POMGNT1 catalyzes the initial addition of N-acetylglucosamine, giving rise to the GlcNAc(beta1-2)Man(alpha1-)O-Ser/Thr moiety and thus providing the necessary basis for the addition of further carbohydrate moieties. Heavily O-glycosylated comprising of up to two thirds of its mass and the carbohydrate composition differs depending on tissue type. Mucin-type O-glycosylation is important for ligand binding activity. O-mannosylation is found in high abundance in both brain and muscle where the most abundant glycan is Sia-alpha-2-3-Gal-beta-1-4-Glc-NAc-beta-1-2-Man. In muscle, glycosylation on Thr-314, Thr-316 and Thr-376 by a phosphorylated O-mannosyl glycan with the structure 2-(N-acetylamido)-2-deoxygalactosyl-beta-1,3-2-(N-acetylamido)-2-deoxyglucosyl-beta-1,4-6-phosphomannose is mediated by like-acetylglucosaminyltransferase (LARGE1) protein amd is required for laminin binding. O-glycosylated in the N-terminal region with a core 1 or possibly core 8 glycan. The brain form displays a unique glycosylation pattern which is absent in other tissues; this form shows enhanced binding to laminin LAMA5 compared to the skeletal muscle form. Post-translationally, N-glycosylated. In terms of processing, autolytic cleavage produces the alpha and beta subunits. In cutaneous cells, as well as in certain pathological conditions, shedding of beta-dystroglycan can occur releasing a peptide of about 30 kDa. SRC-mediated phosphorylation of the PPXY motif of the beta subunit recruits SH2 domain-containing proteins, but inhibits binding to WWW domain-containing proteins, DMD and UTRN. This phosphorylation also inhibits nuclear entry.

The protein localises to the secreted. The protein resides in the extracellular space. Its subcellular location is the cell membrane. It localises to the cytoplasm. It is found in the cytoskeleton. The protein localises to the nucleus. The protein resides in the nucleoplasm. Its subcellular location is the sarcolemma. It localises to the postsynaptic cell membrane. In terms of biological role, the dystroglycan complex is involved in a number of processes including laminin and basement membrane assembly, sarcolemmal stability, cell survival, peripheral nerve myelination, nodal structure, cell migration, and epithelial polarization. Extracellular peripheral glycoprotein that acts as a receptor for extracellular matrix proteins containing laminin-G domains. Receptor for laminin-2 (LAMA2) and agrin in peripheral nerve Schwann cells. Also acts as a receptor for laminin LAMA5. Its function is as follows. Transmembrane protein that plays important roles in connecting the extracellular matrix to the cytoskeleton. Acts as a cell adhesion receptor in both muscle and non-muscle tissues. Receptor for both DMD and UTRN and, through these interactions, scaffolds axin to the cytoskeleton. Also functions in cell adhesion-mediated signaling and implicated in cell polarity. This chain is Dystroglycan 1, found in Canis lupus familiaris (Dog).